Here is a 239-residue protein sequence, read N- to C-terminus: Ribonuclease 3 (239 aa).

The 126-residue stretch at Ile12–Gly137 folds into the RNase III domain. Residue Glu50 coordinates Mg(2+). Asp54 is an active-site residue. Residues Asp123 and Glu126 each coordinate Mg(2+). The active site involves Glu126. Residues Asp162–Val231 enclose the DRBM domain.

This sequence belongs to the ribonuclease III family. Homodimer. It depends on Mg(2+) as a cofactor.

It localises to the cytoplasm. The catalysed reaction is Endonucleolytic cleavage to 5'-phosphomonoester.. Its function is as follows. Digests double-stranded RNA. Involved in the processing of primary rRNA transcript to yield the immediate precursors to the large and small rRNAs (23S and 16S). Processes some mRNAs, and tRNAs when they are encoded in the rRNA operon. Processes pre-crRNA and tracrRNA of type II CRISPR loci if present in the organism. The polypeptide is Ribonuclease 3 (Agrobacterium fabrum (strain C58 / ATCC 33970) (Agrobacterium tumefaciens (strain C58))).